The sequence spans 344 residues: Phenylalanine--tRNA ligase alpha subunit (344 aa).

A Mg(2+)-binding site is contributed by glutamate 256.

It belongs to the class-II aminoacyl-tRNA synthetase family. Phe-tRNA synthetase alpha subunit type 1 subfamily. Tetramer of two alpha and two beta subunits. Mg(2+) is required as a cofactor.

The protein localises to the cytoplasm. It carries out the reaction tRNA(Phe) + L-phenylalanine + ATP = L-phenylalanyl-tRNA(Phe) + AMP + diphosphate + H(+). In Oceanobacillus iheyensis (strain DSM 14371 / CIP 107618 / JCM 11309 / KCTC 3954 / HTE831), this protein is Phenylalanine--tRNA ligase alpha subunit.